The chain runs to 257 residues: Ribosome-inactivating protein charybdin (257 aa).

Residue glutamate 167 is part of the active site. Cysteine 217 and cysteine 254 are joined by a disulfide.

The protein belongs to the ribosome-inactivating protein family. Type 1 RIP subfamily.

It carries out the reaction Endohydrolysis of the N-glycosidic bond at one specific adenosine on the 28S rRNA.. Inhibits translation in rabbit reticulocytes. The protein is Ribosome-inactivating protein charybdin of Drimia maritima (Sea squill).